A 275-amino-acid polypeptide reads, in one-letter code: Large ribosomal subunit protein uL2 (275 aa).

Positions 28–38 (EPYAPLLDKKS) are enriched in basic and acidic residues. Disordered regions lie at residues 28–55 (EPYA…RHVG) and 224–258 (AMNP…GYKT).

It belongs to the universal ribosomal protein uL2 family. Part of the 50S ribosomal subunit. Forms a bridge to the 30S subunit in the 70S ribosome.

Its function is as follows. One of the primary rRNA binding proteins. Required for association of the 30S and 50S subunits to form the 70S ribosome, for tRNA binding and peptide bond formation. It has been suggested to have peptidyltransferase activity; this is somewhat controversial. Makes several contacts with the 16S rRNA in the 70S ribosome. In Cellvibrio japonicus (strain Ueda107) (Pseudomonas fluorescens subsp. cellulosa), this protein is Large ribosomal subunit protein uL2.